The primary structure comprises 275 residues: 5'-nucleotidase SurE (275 aa).

The a divalent metal cation site is built by aspartate 14, aspartate 15, serine 46, and asparagine 104.

This sequence belongs to the SurE nucleotidase family. It depends on a divalent metal cation as a cofactor.

It localises to the cytoplasm. It carries out the reaction a ribonucleoside 5'-phosphate + H2O = a ribonucleoside + phosphate. Its function is as follows. Nucleotidase that shows phosphatase activity on nucleoside 5'-monophosphates. The polypeptide is 5'-nucleotidase SurE (Synechocystis sp. (strain ATCC 27184 / PCC 6803 / Kazusa)).